The following is a 295-amino-acid chain: GATA zinc finger domain-containing protein 23 (295 aa).

Residues 115 to 126 (ASTSKTATSKNV) are compositionally biased toward low complexity. Positions 115–240 (ASTSKTATSK…KRGRPSKIQP (126 aa)) are disordered. Positions 127–145 (ISNIENNTNKSQPLESNDL) are enriched in polar residues. The segment covering 146–163 (TPPSSKSSNSSPSTSPSK) has biased composition (low complexity). Basic residues predominate over residues 164–174 (RVSKSKTRVTK). Residues 181 to 227 (STSSSGETENLTTTSTADTTATTDTADTTDGTNTRTSNTSSDDTTTE) are compositionally biased toward low complexity. The a.T hook DNA-binding region spans 229–241 (TKKRGRPSKIQPD). The GATA-type zinc-finger motif lies at 243 to 270 (CYVCRRTFTSYWRKGIFNDQNEDLCNPC).

This is GATA zinc finger domain-containing protein 23 (gtaW) from Dictyostelium discoideum (Social amoeba).